Reading from the N-terminus, the 635-residue chain is Chaperone protein DnaK (635 aa).

At Thr198 the chain carries Phosphothreonine; by autocatalysis. The tract at residues Gln606–Lys635 is disordered. The segment covering Asp622–Lys635 has biased composition (acidic residues).

It belongs to the heat shock protein 70 family.

In terms of biological role, acts as a chaperone. The protein is Chaperone protein DnaK of Novosphingobium aromaticivorans (strain ATCC 700278 / DSM 12444 / CCUG 56034 / CIP 105152 / NBRC 16084 / F199).